Consider the following 508-residue polypeptide: Amphoterin-induced protein 3 (508 aa).

Residues 1–19 (MAWLVLSGILLCMLGAGLG) form the signal peptide. Residues 20–383 (TSDLEDVLPP…ARPEPETFNT (364 aa)) lie on the Extracellular side of the membrane. The region spanning 25-61 (DVLPPAPHNCPDICICAADVLSCAGRGLQDLPVALPT) is the LRRNT domain. Intrachain disulfides connect cysteine 34–cysteine 40 and cysteine 38–cysteine 47. LRR repeat units follow at residues 62 to 83 (TAAELDLSHNALKRLHPGWLAP), 86 to 107 (RLRALHLGYNKLEVLGHGAFTN), 110 to 133 (GLRTLDLSSNMLRMLHTHDLDGLE), 134 to 155 (ELEKLLLFNNSLMHLDLDAFQG), 158 to 178 (MLSHLYLSCNELSSFSFNHLH), and 184 to 207 (RLRTLDLSSNWLKHISIPELAALP). A glycan (N-linked (GlcNAc...) asparagine) is linked at asparagine 107. Asparagine 142 carries an N-linked (GlcNAc...) asparagine glycan. The LRRCT domain occupies 219 to 275 (NPLPCDCSLYHLLRRWHQRGLSALHDFEREYTCLVFKVSESRVRFFEHSRVFKNCSV). Intrachain disulfides connect cysteine 223–cysteine 251, cysteine 225–cysteine 273, and cysteine 300–cysteine 352. 4 N-linked (GlcNAc...) asparagine glycosylation sites follow: asparagine 272, asparagine 301, asparagine 362, and asparagine 368. The region spanning 279–370 (PGLELPEEQL…HNQTLEYNVS (92 aa)) is the Ig-like C2-type domain. Residues 384–404 (GFTTLLGCIVGLVLVLLYLFA) traverse the membrane as a helical segment. Residues 405-508 (PPCRGCCHCC…STGSEGLVMS (104 aa)) are Cytoplasmic-facing.

It belongs to the immunoglobulin superfamily. AMIGO family. As to quaternary structure, binds AMIGO1 or AMIGO2. As to expression, ubiquitous.

Its subcellular location is the membrane. In terms of biological role, may mediate heterophilic cell-cell interaction. May contribute to signal transduction through its intracellular domain. The polypeptide is Amphoterin-induced protein 3 (Mus musculus (Mouse)).